We begin with the raw amino-acid sequence, 386 residues long: ATP phosphoribosyltransferase regulatory subunit (386 aa).

The protein belongs to the class-II aminoacyl-tRNA synthetase family. HisZ subfamily. In terms of assembly, heteromultimer composed of HisG and HisZ subunits.

The protein localises to the cytoplasm. Its pathway is amino-acid biosynthesis; L-histidine biosynthesis; L-histidine from 5-phospho-alpha-D-ribose 1-diphosphate: step 1/9. Functionally, required for the first step of histidine biosynthesis. May allow the feedback regulation of ATP phosphoribosyltransferase activity by histidine. This Variovorax paradoxus (strain S110) protein is ATP phosphoribosyltransferase regulatory subunit.